Consider the following 158-residue polypeptide: 6,7-dimethyl-8-ribityllumazine synthase (158 aa).

5-amino-6-(D-ribitylamino)uracil-binding positions include Phe22, 57–59 (AVE), and 81–83 (AVI). 86-87 (GT) provides a ligand contact to (2S)-2-hydroxy-3-oxobutyl phosphate. His89 serves as the catalytic Proton donor. Phe114 contacts 5-amino-6-(D-ribitylamino)uracil. Arg128 serves as a coordination point for (2S)-2-hydroxy-3-oxobutyl phosphate.

It belongs to the DMRL synthase family. Forms an icosahedral capsid composed of 60 subunits, arranged as a dodecamer of pentamers.

It carries out the reaction (2S)-2-hydroxy-3-oxobutyl phosphate + 5-amino-6-(D-ribitylamino)uracil = 6,7-dimethyl-8-(1-D-ribityl)lumazine + phosphate + 2 H2O + H(+). Its pathway is cofactor biosynthesis; riboflavin biosynthesis; riboflavin from 2-hydroxy-3-oxobutyl phosphate and 5-amino-6-(D-ribitylamino)uracil: step 1/2. Catalyzes the formation of 6,7-dimethyl-8-ribityllumazine by condensation of 5-amino-6-(D-ribitylamino)uracil with 3,4-dihydroxy-2-butanone 4-phosphate. This is the penultimate step in the biosynthesis of riboflavin. In Shewanella putrefaciens (strain CN-32 / ATCC BAA-453), this protein is 6,7-dimethyl-8-ribityllumazine synthase.